A 104-amino-acid polypeptide reads, in one-letter code: Large ribosomal subunit protein bL21 (104 aa).

The protein belongs to the bacterial ribosomal protein bL21 family. Part of the 50S ribosomal subunit. Contacts protein L20.

Its function is as follows. This protein binds to 23S rRNA in the presence of protein L20. The sequence is that of Large ribosomal subunit protein bL21 from Pseudomonas putida (strain W619).